The sequence spans 125 residues: Small ribosomal subunit protein uS12 (125 aa).

Residues 1-28 (MPTISQLIGSERKRLTRKTKSPALKSCP) are disordered. The residue at position 89 (aspartate 89) is a 3-methylthioaspartic acid. The disordered stretch occupies residues 104 to 125 (TAGVKDRRQSRSKYGAKAPKND).

It belongs to the universal ribosomal protein uS12 family. Part of the 30S ribosomal subunit. Contacts proteins S8 and S17. May interact with IF1 in the 30S initiation complex.

In terms of biological role, with S4 and S5 plays an important role in translational accuracy. Functionally, interacts with and stabilizes bases of the 16S rRNA that are involved in tRNA selection in the A site and with the mRNA backbone. Located at the interface of the 30S and 50S subunits, it traverses the body of the 30S subunit contacting proteins on the other side and probably holding the rRNA structure together. The combined cluster of proteins S8, S12 and S17 appears to hold together the shoulder and platform of the 30S subunit. The protein is Small ribosomal subunit protein uS12 of Prochlorococcus marinus subsp. pastoris (strain CCMP1986 / NIES-2087 / MED4).